We begin with the raw amino-acid sequence, 870 residues long: MTEQRTKYADSILTTKSPYEATETIRIRLSQVKLLNKDFYLLFKELANLKRNYAQQLRKIIAENEDITKILNAQMIESNVLTPQEMSAFRFNSLGELRNVWDTVIEELKSDLKSSTEYYNTLDQQVVRELKESVENNTSWRESKDLHSKLSKNAASIEHYSKNNENSSHLEEARRQWDQQSPYLFELFETIDYNRLDTLKNCMLRFQTSFSDYLLNTTKECETVMTKFLAFEPQSEIDRFAKDASQYNFQLSSSSKEVVPNNASPASATGARPVSVSNGAANTEREKKSPQKDKRKSAFGNIGHRLASASSSLTHNDLMNNEFSDSTNNSSLKSKKSSHTLRSKVGSIFGRNKTKNKRQQQSSSNSHIQASITETPNNSSTRVSSTATSSIYQKQRRPTYSSSKSNNWTPGEASDTPPLPPHATPKNVDAPVTADTPPAQTFTPSEVPPSTPQQSSPPTAKEPDSSNLPKTVPISISQPPLQPQSKTKPLPVEPASPSISLPTATVDNQPSGQVDSRPLHIRAPALPPSRKQNFIHNRDSQLYDSLPNHGSGATPTSSSLSSIPQERPVSTLSSQITGELRELNPQATGSSTSLVGQSLFQHSSLDTSQFGLNASIAEVLNASFKDGMLQNSQLIGEIALNYLPNSVMNSPLPIGINLRINNGAKFEKVILNQAFIERVAPEEFKVNPSFIDSRTLGAIKYSIKEPIAPIVIHPVWRFESHQASVVLTVKMSPSLPDEISQIVIEDLVVFVNIDGANATSALSKPQGSFSKEKKRITWRFKEPVVLTRNGEGQRLIARFITDGLAHESAKGVITKFTISETDNVALPHSGAGSGITLTCQELDENNPFGGEWLDVNTKRTLTTGNYHGLA.

Polar residues predominate over residues 252-267 (SSSSKEVVPNNASPAS). Disordered stretches follow at residues 252-298 (SSSS…RKSA) and 310-574 (SSSL…TLSS). Lys-256 is covalently cross-linked (Glycyl lysine isopeptide (Lys-Gly) (interchain with G-Cter in ubiquitin)). Phosphoserine is present on Ser-264. The span at 283–292 (TEREKKSPQK) shows a compositional bias: basic and acidic residues. The segment covering 310–323 (SSSLTHNDLMNNEF) has biased composition (polar residues). Ser-331 is modified (phosphoserine). Positions 333 to 342 (KSKKSSHTLR) are enriched in basic residues. A compositionally biased stretch (polar residues) spans 367–378 (HIQASITETPNN). Over residues 379–390 (SSTRVSSTATSS) the composition is skewed to low complexity. The segment covering 398 to 409 (PTYSSSKSNNWT) has biased composition (polar residues). Phosphothreonine is present on Thr-416. Low complexity predominate over residues 473 to 485 (PISISQPPLQPQS). Phosphoserine occurs at positions 496 and 500. Residues 497–514 (PSISLPTATVDNQPSGQV) show a composition bias toward polar residues. Thr-577 carries the phosphothreonine modification. Residues 609-869 (QFGLNASIAE…TLTTGNYHGL (261 aa)) form the MHD domain.

Belongs to the SYP1 family. In terms of assembly, interacts with CDC3, CDC10, CDC11, CDC12, EDE1 and EPS15.

It localises to the bud neck. Functionally, multi-functional protein that contributes to the endocytic process, but also to events that occur at the neck during budding and/or cytokinesis. Plays a role as an endocytic adapters with membrane-tubulation activity that associates with transmembrane cargo proteins and initiates the formation of endocytic sites. Contributes to the stabilization of the nascent clathrin-coated pit. Also plays a role in late endocytosis by mediating vesiculation. Involved in the regulation of cell cycle-dependent dynamics of the septin cytoskeleton by promoting septin turnover in different cell cycle stages. May act through the RHO2 signaling pathway to repolarize cortical actin patches in profilin-deficient cells. The polypeptide is Suppressor of yeast profilin deletion (SYP1) (Saccharomyces cerevisiae (strain ATCC 204508 / S288c) (Baker's yeast)).